Consider the following 576-residue polypeptide: Arginine--tRNA ligase (576 aa).

The 'HIGH' region motif lies at 122 to 132 (PNVAKQMHVGH).

This sequence belongs to the class-I aminoacyl-tRNA synthetase family. Monomer.

It is found in the cytoplasm. The enzyme catalyses tRNA(Arg) + L-arginine + ATP = L-arginyl-tRNA(Arg) + AMP + diphosphate. This is Arginine--tRNA ligase from Yersinia pseudotuberculosis serotype I (strain IP32953).